The primary structure comprises 310 residues: Dermonecrotic toxin LiSicTox-alphaII2 (310 aa).

An N-terminal signal peptide occupies residues 1 to 18 (MLLRIALILGCWSILSEG). The propeptide occupies 19-26 (AENDIAER). Residue His38 is part of the active site. Residues Glu58 and Asp60 each coordinate Mg(2+). Residue His74 is the Nucleophile of the active site. 2 cysteine pairs are disulfide-bonded: Cys78/Cys84 and Cys80/Cys224. N-linked (GlcNAc...) asparagine glycosylation is present at Asn99. Asp118 is a binding site for Mg(2+).

The protein belongs to the arthropod phospholipase D family. Class II subfamily. Requires Mg(2+) as cofactor. As to expression, expressed by the venom gland.

The protein localises to the secreted. It catalyses the reaction an N-(acyl)-sphingosylphosphocholine = an N-(acyl)-sphingosyl-1,3-cyclic phosphate + choline. The catalysed reaction is an N-(acyl)-sphingosylphosphoethanolamine = an N-(acyl)-sphingosyl-1,3-cyclic phosphate + ethanolamine. The enzyme catalyses a 1-acyl-sn-glycero-3-phosphocholine = a 1-acyl-sn-glycero-2,3-cyclic phosphate + choline. It carries out the reaction a 1-acyl-sn-glycero-3-phosphoethanolamine = a 1-acyl-sn-glycero-2,3-cyclic phosphate + ethanolamine. Functionally, dermonecrotic toxins cleave the phosphodiester linkage between the phosphate and headgroup of certain phospholipids (sphingolipid and lysolipid substrates), forming an alcohol (often choline) and a cyclic phosphate. This toxin acts on sphingomyelin (SM). It may also act on ceramide phosphoethanolamine (CPE), lysophosphatidylcholine (LPC) and lysophosphatidylethanolamine (LPE), but not on lysophosphatidylserine (LPS), and lysophosphatidylglycerol (LPG). It acts by transphosphatidylation, releasing exclusively cyclic phosphate products as second products. Induces dermonecrosis, hemolysis, increased vascular permeability, edema, inflammatory response, and platelet aggregation. This Loxosceles intermedia (Brown spider) protein is Dermonecrotic toxin LiSicTox-alphaII2.